We begin with the raw amino-acid sequence, 396 residues long: L-lactate dehydrogenase (396 aa).

Residues M1–G380 form the FMN hydroxy acid dehydrogenase domain. Residue Y24 coordinates substrate. Residues S106 and Q127 each contribute to the FMN site. Residue Y129 coordinates substrate. FMN is bound at residue T155. R164 serves as a coordination point for substrate. K251 is an FMN binding site. Catalysis depends on H275, which acts as the Proton acceptor. R278 is a substrate binding site. Position 306-330 (D306–R330) interacts with FMN.

The protein belongs to the FMN-dependent alpha-hydroxy acid dehydrogenase family. It depends on FMN as a cofactor.

It is found in the cell inner membrane. The catalysed reaction is (S)-lactate + A = pyruvate + AH2. Functionally, catalyzes the conversion of L-lactate to pyruvate. Is coupled to the respiratory chain. The chain is L-lactate dehydrogenase from Salmonella choleraesuis (strain SC-B67).